We begin with the raw amino-acid sequence, 344 residues long: MVRTRPTYIYLPDTAAGWPFPRTVNPYYEETKAESEAWISSLYPFDAYVQKKFNACDFTLLASMAYPWLSKDHIRTGADLMMLFFVFDEYSDVASVKDAQEMVDIVMDALRNPHKPRPKDENILGEIAKQFWERGVKTASAPSARRFVDYFEGYLKSVVEQAQDREHNRIRSIAEYFDVRRLTVGARPSYALMELGMNIPDEVWEDPAMEIMAVCVTDMIILDNDMLSWNVEQSRGDDAHNIVRIVMEANKTDVASAMKWVEDYHNLLKKTFLDVYNSVPSWGPEVDAQVQEYARGLGNWVICNISWSFESARYFGKEGRRIREERVVAILDKPVLVGVLESDA.

Mg(2+) is bound by residues Asp-88, Asn-224, Ser-228, and Glu-232. The short motif at 88 to 92 (DEYSD) is the DDXXD motif element. An NSE/DTE motif motif is present at residues 224–232 (NDMLSWNVE). The (2E,6E)-farnesyl diphosphate site is built by Arg-313 and Tyr-314.

It belongs to the terpene synthase family. Mg(2+) is required as a cofactor.

Terpene cyclase that catalyzes the cyclization of farnesyl diphosphate (FPP) to a single major sesquiterpene scaffold whose chemical structure is still unknown. The protein is Sesquiterpene synthase 9 of Postia placenta (strain ATCC 44394 / Madison 698-R) (Brown rot fungus).